The following is a 493-amino-acid chain: N-acetylglucosamine kinase 1 (493 aa).

Residues 27 to 490 (ESSVLSSIVE…SIIGAAIGAA (464 aa)) form the Hexokinase domain. The segment at 79 to 221 (TGDEHGQYLV…GLTLDVQSIL (143 aa)) is hexokinase small subdomain. The tract at residues 222-479 (NDSLAVYSAG…IKVDLKLIEN (258 aa)) is hexokinase large subdomain.

Belongs to the hexokinase family. Interacts with histone deacetylase SIR2 under filamentation-inducing conditions.

Its subcellular location is the cytoplasm. It is found in the nucleus. The protein resides in the mitochondrion. The catalysed reaction is N-acetyl-D-glucosamine + ATP = N-acetyl-D-glucosamine 6-phosphate + ADP + H(+). The enzyme catalyses D-mannose + ATP = D-mannose 6-phosphate + ADP + H(+). It catalyses the reaction D-glucose + ATP = D-glucose 6-phosphate + ADP + H(+). It carries out the reaction D-glucosamine + ATP = D-glucosamine 6-phosphate + ADP + H(+). Its pathway is carbohydrate metabolism; hexose metabolism. It participates in carbohydrate degradation; glycolysis; D-glyceraldehyde 3-phosphate and glycerone phosphate from D-glucose: step 1/4. In terms of biological role, component of the N-acetylglucosamine catabolic cascade that phosphorylates N-acetylglucosamine (GlcNAc), and allows the unique ability to utilise GlcNAc as carbon source. Converts GlcNAc to GlcNAc-6-P. Also able to phosphorylate glucose, glucosamine (GlcN), and mannose. Galactose, fructose, N-acetylmannosamine (ManNAc), mannosamine (ManN), galactosamine (GalN), and N-acetylgalactosamine (GalNAc) are not phosphorylated by HXK1. GlcNAc metabolism is closely associated with virulence and morphogenesis, and is involved in the cell wall synthesis. Acts both as a repressor and an activator of genes involved in maintaining cellular homeostasis. Contributes to white-opaque morphological transition and plays a role as a filamentation repressor. In Candida albicans (strain SC5314 / ATCC MYA-2876) (Yeast), this protein is N-acetylglucosamine kinase 1.